Reading from the N-terminus, the 432-residue chain is Repulsive guidance molecule A (432 aa).

Residues 1-29 (MGRGAGSTALGLFQILPVFLCIFPPVTSP) form the signal peptide. A propeptide spans 30-149 (CKILKCNSEF…NYTHCGLFGD (120 aa)) (removed in mature form). N-linked (GlcNAc...) asparagine glycosylation is present at Asn-96. A disordered region spans residues 99–122 (KDGPTSQPRLRTLPPGDSQERSDS). Intrachain disulfides connect Cys-126-Cys-207 and Cys-144-Cys-296. N-linked (GlcNAc...) asparagine glycosylation is present at Asn-140. Residue Asn-404 is the site of GPI-anchor amidated asparagine attachment. Positions 405–432 (AAPSEHPWALPALWVALLSLSQCWLGLL) are cleaved as a propeptide — removed in mature form.

It belongs to the repulsive guidance molecule (RGM) family. In terms of processing, autocatalytically cleaved at low pH; the two chains remain linked via two disulfide bonds.

The protein localises to the cell membrane. Its function is as follows. Acts as an axon-specific repulsive guidance molecule in the retinotectal system. Repulsive for a subset of axons of the temporal half of the retina. Provides thus positional information for the temporal axons invading the optic tectum in the stratum opticum. The sequence is that of Repulsive guidance molecule A (RGMA) from Gallus gallus (Chicken).